Reading from the N-terminus, the 481-residue chain is Ribulose bisphosphate carboxylase large chain (481 aa).

The propeptide occupies 1–2; that stretch reads MS. P3 carries the N-acetylproline modification. K14 carries the N6,N6,N6-trimethyllysine modification. Substrate-binding residues include N123 and T173. Catalysis depends on K175, which acts as the Proton acceptor. K177 serves as a coordination point for substrate. 3 residues coordinate Mg(2+): K201, D203, and E204. K201 carries the N6-carboxylysine modification. Catalysis depends on H294, which acts as the Proton acceptor. The substrate site is built by R295, H327, and S379.

Belongs to the RuBisCO large chain family. Type I subfamily. In terms of assembly, heterohexadecamer of 8 large chains and 8 small chains; disulfide-linked. The disulfide link is formed within the large subunit homodimers. The cofactor is Mg(2+). In terms of processing, the disulfide bond which can form in the large chain dimeric partners within the hexadecamer appears to be associated with oxidative stress and protein turnover.

It is found in the plastid. It catalyses the reaction 2 (2R)-3-phosphoglycerate + 2 H(+) = D-ribulose 1,5-bisphosphate + CO2 + H2O. It carries out the reaction D-ribulose 1,5-bisphosphate + O2 = 2-phosphoglycolate + (2R)-3-phosphoglycerate + 2 H(+). In terms of biological role, ruBisCO catalyzes two reactions: the carboxylation of D-ribulose 1,5-bisphosphate, the primary event in carbon dioxide fixation, as well as the oxidative fragmentation of the pentose substrate in the photorespiration process. Both reactions occur simultaneously and in competition at the same active site. The chain is Ribulose bisphosphate carboxylase large chain from Cuscuta gronovii (Common dodder).